Consider the following 474-residue polypeptide: MFS transporter SAT21 (474 aa).

6 helical membrane-spanning segments follow: residues 7–27 (LVLPFILYLLFRLSHFLLEVP), 64–84 (LVVGWKMTFDSIPGLMSILYF), 101–121 (CVGYLLAILWVLITCLFHQVF), 131–151 (LFLFIGGGQLVFAAVITAFVA), 162–182 (FLFLLAAMPHMDKVASPALAT), and 189–209 (LFLPSLVSMAIVVICVALLQM). Positions 220 to 252 (KVVGSTSDQTEPFLRSSSNSSQESGTAAPAIDP) are disordered. Positions 222–244 (VGSTSDQTEPFLRSSSNSSQESG) are enriched in polar residues. An N-linked (GlcNAc...) asparagine glycan is attached at N238. 6 helical membrane passes run 276 to 296 (FICYLCFFLKSNAMASEAFIF), 315 to 335 (LALSSGAVISTLIICPLANAT), 346 to 366 (INIGAVHASSIVLVASFIMAW), 374 to 394 (FIFSMLAAGFGEGLEPALQGV), 406 to 426 (SIFALMCTCSLLGDMTGGPLM), and 445 to 465 (FLASALVFGAVIVLAHLLWAL).

Belongs to the major facilitator superfamily.

Its subcellular location is the cell membrane. MFS transporter; part of the satratoxin SC3 cluster involved in the biosynthesis of satratoxins, trichothecene mycotoxins that are associated with human food poisonings. Satratoxins are suggested to be made by products of multiple gene clusters (SC1, SC2 and SC3) that encode 21 proteins in all, including polyketide synthases, acetyltransferases, and other enzymes expected to modify the trichothecene skeleton. SC1 encodes 10 proteins, SAT1 to SAT10. The largest are SAT8, which encodes a putative polyketide synthase (PKS) with a conventional non-reducing architecture, and SAT10, a putative protein containing four ankyrin repeats and thus may be involved in protein scaffolding. The putative short-chain reductase SAT3 may assist the PKS in some capacity. SAT6 contains a secretory lipase domain and acts probably as a trichothecene esterase. SAT5 encodes a putative acetyltransferase, and so, with SAT6, may affect endogenous protection from toxicity. The probable transcription factor SAT9 may regulate the expression of the SC1 cluster. SC2 encodes proteins SAT11 to SAT16, the largest of which encodes the putative reducing PKS SAT13. SAT11 is a cytochrome P450 monooxygenase, while SAT14 and SAT16 are probable acetyltransferases. The SC2 cluster may be regulated by the transcription factor SAT15. SC3 is a small cluster that encodes 5 proteins, SAT17 to SAT21. SAT21 is a putative MFS-type transporter which may have a role in exporting secondary metabolites. The four other proteins putatively encoded in SC3 include the taurine hydroxylase-like protein SAT17, the O-methyltransferase SAT18, the acetyltransferase SAT19, and the Cys6-type zinc finger SAT20, the latter being probably involved in regulation of SC3 expression. In Stachybotrys chartarum (strain CBS 109288 / IBT 7711) (Toxic black mold), this protein is MFS transporter SAT21.